We begin with the raw amino-acid sequence, 103 residues long: Large ribosomal subunit protein bL21 (103 aa).

This sequence belongs to the bacterial ribosomal protein bL21 family. Part of the 50S ribosomal subunit. Contacts protein L20.

Its function is as follows. This protein binds to 23S rRNA in the presence of protein L20. This chain is Large ribosomal subunit protein bL21, found in Clostridium acetobutylicum (strain ATCC 824 / DSM 792 / JCM 1419 / IAM 19013 / LMG 5710 / NBRC 13948 / NRRL B-527 / VKM B-1787 / 2291 / W).